The chain runs to 312 residues: uncharacterized protein (312 aa).

One can recognise an HTH lysR-type domain in the interval 8–65 (PGLTCFEIFLAIAEAGSLGGAARELGLTQQAVSRRLASMEAQIGVRLAIRTTRGSQLT). A DNA-binding region (H-T-H motif) is located at residues 25 to 45 (LGGAARELGLTQQAVSRRLAS).

Belongs to the LysR transcriptional regulatory family.

This is an uncharacterized protein from Mycobacterium tuberculosis (strain CDC 1551 / Oshkosh).